Consider the following 305-residue polypeptide: Protein EXORDIUM-like 2 (305 aa).

A signal peptide spans 1–23 (MASNYRFAIFLTLFFATAGFSAA). N-linked (GlcNAc...) asparagine glycosylation is present at Asn-44.

Belongs to the EXORDIUM family.

It localises to the secreted. The protein localises to the extracellular space. It is found in the apoplast. Its function is as follows. May play a role in a brassinosteroid-dependent regulation of growth and development. This Arabidopsis thaliana (Mouse-ear cress) protein is Protein EXORDIUM-like 2 (EXL2).